Reading from the N-terminus, the 208-residue chain is Small ribosomal subunit protein uS4 (208 aa).

Residues 97–160 (TRLDNVCYRM…QKQLRVQEAL (64 aa)) form the S4 RNA-binding domain.

Belongs to the universal ribosomal protein uS4 family. As to quaternary structure, part of the 30S ribosomal subunit. Contacts protein S5. The interaction surface between S4 and S5 is involved in control of translational fidelity.

One of the primary rRNA binding proteins, it binds directly to 16S rRNA where it nucleates assembly of the body of the 30S subunit. Functionally, with S5 and S12 plays an important role in translational accuracy. The polypeptide is Small ribosomal subunit protein uS4 (Xanthomonas axonopodis pv. citri (strain 306)).